The following is a 473-amino-acid chain: uncharacterized protein (473 aa).

The N-terminal stretch at 1-35 is a signal peptide; sequence MLWAHCGRFLRYHLLPLLLCRLPFLLFFQRPQWAH. 3 disordered regions span residues 142–201, 232–254, and 331–437; these read QRRR…RRRH, RGRLRHPAGSGPNTGGPRPGGAG, and IIPP…MTTN. Over residues 155 to 165 the composition is skewed to pro residues; sequence PSFPPPDPPSQ. Residues 168–182 show a composition bias toward basic and acidic residues; the sequence is EDARDADAERAESPH. Residues 243 to 254 are compositionally biased toward gly residues; sequence PNTGGPRPGGAG. Basic and acidic residues predominate over residues 341 to 397; that stretch reads QNEEPRQQLTGEETRNSTHTQREEVEDVSREGAREGNDGSRASGNDERRNNAGRYDD.

It belongs to the HHV-5 UL13 protein family. In terms of assembly, interacts with host MICOS complex subunits IMMT and CHCHD3.

The protein resides in the host mitochondrion. Its function is as follows. Plays an essential role during infection by modulating mitochondrial ultrastructure and thereby increasing bioenergetic potential. Mechanistically, alters cristae architecture by interacting with components of the host mitochondrial contact site and cristae organizing system (MICOS) complex. This is an uncharacterized protein from Human cytomegalovirus (strain Merlin) (HHV-5).